The sequence spans 928 residues: Serine/threonine-protein kinase atg1 (928 aa).

The Protein kinase domain maps to 6 to 315 (YTRLDEIGRG…FPEFFENEVI (310 aa)). ATP is bound by residues 12–20 (IGRGSFATV) and Lys35. Asp149 (proton acceptor) is an active-site residue. Disordered regions lie at residues 318–470 (PIPG…EQER) and 544–571 (FSGR…PTSA). The span at 359 to 371 (TRREREVNREDVY) shows a compositional bias: basic and acidic residues. The segment covering 437–452 (TTTAIERQRSRNTYSE) has biased composition (polar residues). 2 stretches are compositionally biased toward basic and acidic residues: residues 459 to 470 (QPADKLKEEQER) and 548 to 564 (SRAD…ERRY).

Belongs to the protein kinase superfamily. Ser/Thr protein kinase family. APG1/unc-51/ULK1 subfamily. In terms of assembly, homodimer. Forms a ternary complex with ATG13 and ATG17.

It is found in the cytoplasm. Its subcellular location is the preautophagosomal structure membrane. The catalysed reaction is L-seryl-[protein] + ATP = O-phospho-L-seryl-[protein] + ADP + H(+). The enzyme catalyses L-threonyl-[protein] + ATP = O-phospho-L-threonyl-[protein] + ADP + H(+). Its function is as follows. Serine/threonine protein kinase involved in the cytoplasm to vacuole transport (Cvt) and found to be essential in autophagy, where it is required for the formation of autophagosomes. Involved in the clearance of protein aggregates which cannot be efficiently cleared by the proteasome. Required for selective autophagic degradation of the nucleus (nucleophagy) as well as for mitophagy which contributes to regulate mitochondrial quantity and quality by eliminating the mitochondria to a basal level to fulfill cellular energy requirements and preventing excess ROS production. Also involved in endoplasmic reticulum-specific autophagic process, in selective removal of ER-associated degradation (ERAD) substrates. Plays a key role in ATG9 and ATG23 cycling through the pre-autophagosomal structure and is necessary to promote ATG18 binding to ATG9 through phosphorylation of ATG9. Catalyzes phosphorylation of ATG4, decreasing the interaction between ATG4 and ATG8 and impairing deconjugation of PE-conjugated forms of ATG8. The chain is Serine/threonine-protein kinase atg1 from Aspergillus clavatus (strain ATCC 1007 / CBS 513.65 / DSM 816 / NCTC 3887 / NRRL 1 / QM 1276 / 107).